Reading from the N-terminus, the 68-residue chain is UPF0352 protein CPS_2611 (68 aa).

It belongs to the UPF0352 family.

This is UPF0352 protein CPS_2611 from Colwellia psychrerythraea (strain 34H / ATCC BAA-681) (Vibrio psychroerythus).